Consider the following 134-residue polypeptide: Fatty acid-binding protein 5 (134 aa).

Positions K23 to K33 match the Nuclear localization signal motif. Hexadecanoate contacts are provided by residues R109 and R129 to Y131. 2 residues coordinate N-eicosanoyl ethanolamine: R109 and Y131. Position 129 to 131 (R129 to Y131) interacts with (9Z,12Z)-octadecadienoate.

Belongs to the calycin superfamily. Fatty-acid binding protein (FABP) family. Monomer.

Its subcellular location is the cytoplasm. The protein localises to the nucleus. It is found in the synapse. The protein resides in the postsynaptic density. It localises to the secreted. It catalyses the reaction hexadecanoate(out) = hexadecanoate(in). The catalysed reaction is (9Z,12Z)-octadecadienoate(out) = (9Z,12Z)-octadecadienoate(in). It carries out the reaction (9Z)-octadecenoate(out) = (9Z)-octadecenoate(in). Its function is as follows. Intracellular carrier for long-chain fatty acids and related active lipids, such as endocannabinoids, that regulate the metabolism and actions of the ligands they bind. In addition to the cytosolic transport, selectively delivers specific fatty acids from the cytosol to the nucleus, wherein they activate nuclear receptors. Delivers retinoic acid to the nuclear receptor peroxisome proliferator-activated receptor delta; which promotes proliferation and survival. May also serve as a synaptic carrier of endocannabinoid at central synapses and thus controls retrograde endocannabinoid signaling. Modulates inflammation by regulating PTGES induction via NF-kappa-B activation, and prostaglandin E2 (PGE2) biosynthesis during inflammation. Has the highest binding affinity for docosahexaenoic acid (DHA) and decreasing relative affinity for eicosapentaenoic acid (EPA), alpha-linolenic acid (ALA), oleic acid, palmitic acid, linoleic acid and stearic acid, respectively. The polypeptide is Fatty acid-binding protein 5 (Pygoscelis papua (Gentoo penguin)).